The chain runs to 352 residues: Glycoprotein integral membrane protein 1 (352 aa).

The N-terminal stretch at 1-25 (MASRCKIHLTVAYLLILCILASAQS) is a signal peptide. Over 26–281 (KQMTTETVVL…KLRRFLSDSV (256 aa)) the chain is Extracellular. N-linked (GlcNAc...) asparagine glycosylation is found at N36, N44, N89, N109, N151, and N197. The segment at 206 to 245 (NSETTQEEIAAPGKLPETPLRMDPETLYESREEEERRSDS) is disordered. Basic and acidic residues predominate over residues 225–244 (LRMDPETLYESREEEERRSD). A helical transmembrane segment spans residues 282 to 302 (PLFFLVMWVVVVGVAGSAVVI). The Cytoplasmic segment spans residues 303–352 (KILDLIFPSCEHRGFFHLNPETLMPDDEKVSLIDNMEGDMTEKSILLIEK).

Its subcellular location is the membrane. The chain is Glycoprotein integral membrane protein 1 (ginm1) from Danio rerio (Zebrafish).